Consider the following 291-residue polypeptide: uncharacterized protein (291 aa).

The next 4 helical transmembrane spans lie at 13–33 (IILI…SITI), 84–104 (IVLF…IGII), 111–131 (LLHL…FIII), and 219–239 (LIYC…IYYL).

The protein resides in the cell membrane. This is an uncharacterized protein from Ureaplasma parvum serovar 3 (strain ATCC 700970).